A 346-amino-acid chain; its full sequence is 4-hydroxy-3-methylbut-2-enyl diphosphate reductase (346 aa).

Cysteine 19 contributes to the [4Fe-4S] cluster binding site. Positions 48 and 84 each coordinate (2E)-4-hydroxy-3-methylbut-2-enyl diphosphate. Positions 48 and 84 each coordinate dimethylallyl diphosphate. The isopentenyl diphosphate site is built by histidine 48 and histidine 84. Residue cysteine 106 participates in [4Fe-4S] cluster binding. Residue histidine 134 participates in (2E)-4-hydroxy-3-methylbut-2-enyl diphosphate binding. Histidine 134 provides a ligand contact to dimethylallyl diphosphate. Histidine 134 is an isopentenyl diphosphate binding site. Glutamate 136 serves as the catalytic Proton donor. Threonine 175 is a (2E)-4-hydroxy-3-methylbut-2-enyl diphosphate binding site. Cysteine 205 lines the [4Fe-4S] cluster pocket. Serine 233, serine 234, asparagine 235, and serine 278 together coordinate (2E)-4-hydroxy-3-methylbut-2-enyl diphosphate. Dimethylallyl diphosphate contacts are provided by serine 233, serine 234, asparagine 235, and serine 278. 4 residues coordinate isopentenyl diphosphate: serine 233, serine 234, asparagine 235, and serine 278.

This sequence belongs to the IspH family. The cofactor is [4Fe-4S] cluster.

The enzyme catalyses isopentenyl diphosphate + 2 oxidized [2Fe-2S]-[ferredoxin] + H2O = (2E)-4-hydroxy-3-methylbut-2-enyl diphosphate + 2 reduced [2Fe-2S]-[ferredoxin] + 2 H(+). It catalyses the reaction dimethylallyl diphosphate + 2 oxidized [2Fe-2S]-[ferredoxin] + H2O = (2E)-4-hydroxy-3-methylbut-2-enyl diphosphate + 2 reduced [2Fe-2S]-[ferredoxin] + 2 H(+). It participates in isoprenoid biosynthesis; dimethylallyl diphosphate biosynthesis; dimethylallyl diphosphate from (2E)-4-hydroxy-3-methylbutenyl diphosphate: step 1/1. Its pathway is isoprenoid biosynthesis; isopentenyl diphosphate biosynthesis via DXP pathway; isopentenyl diphosphate from 1-deoxy-D-xylulose 5-phosphate: step 6/6. In terms of biological role, catalyzes the conversion of 1-hydroxy-2-methyl-2-(E)-butenyl 4-diphosphate (HMBPP) into a mixture of isopentenyl diphosphate (IPP) and dimethylallyl diphosphate (DMAPP). Acts in the terminal step of the DOXP/MEP pathway for isoprenoid precursor biosynthesis. The sequence is that of 4-hydroxy-3-methylbut-2-enyl diphosphate reductase from Brucella abortus (strain S19).